The sequence spans 418 residues: Serine protease inhibitor A3N (418 aa).

The first 29 residues, 1–29, serve as a signal peptide directing secretion; that stretch reads MTRLVTLELLMAGIGSALLCFPDCILGED. A Phosphoserine modification is found at S93. N-linked (GlcNAc...) asparagine glycosylation is found at N104, N258, and N269. The RCL stretch occupies residues 367–394; the sequence is GTEAAAATGVKFVPMSAKLDPLIIAFDR.

Belongs to the serpin family. Post-translationally, N-glycosylated. Liver.

It localises to the secreted. This is Serine protease inhibitor A3N (Serpina3n) from Rattus norvegicus (Rat).